The following is a 1011-amino-acid chain: DNA-directed RNA polymerase 2, chloroplastic/mitochondrial (1011 aa).

The tract at residues lysine 307–glutamine 326 is disordered. Residues aspartate 712, lysine 787, and aspartate 944 contribute to the active site.

The protein belongs to the phage and mitochondrial RNA polymerase family. As to quaternary structure, interacts with NIP1 and NIP2.

Its subcellular location is the plastid. It localises to the chloroplast. The protein resides in the mitochondrion. The enzyme catalyses RNA(n) + a ribonucleoside 5'-triphosphate = RNA(n+1) + diphosphate. Its function is as follows. DNA-dependent RNA polymerase catalyzes the transcription of DNA into RNA using the four ribonucleoside triphosphates as substrates. The protein is DNA-directed RNA polymerase 2, chloroplastic/mitochondrial (RPOT2) of Arabidopsis thaliana (Mouse-ear cress).